A 565-amino-acid polypeptide reads, in one-letter code: Periplasmic trehalase (565 aa).

An N-terminal signal peptide occupies residues 1-30 (MKSPTPSRPQKMALIPACIFLCFAALSVQA). Residues arginine 152, 159 to 160 (WD), asparagine 196, 205 to 207 (RSQ), 277 to 279 (RPE), and glycine 310 contribute to the substrate site. Catalysis depends on proton donor/acceptor residues aspartate 312 and glutamate 496. Glutamate 511 serves as a coordination point for substrate. A disordered region spans residues 539 to 565 (CDNVPATRPLSESTTQPLKQKEAEPTP).

The protein belongs to the glycosyl hydrolase 37 family. Monomer.

Its subcellular location is the periplasm. It carries out the reaction alpha,alpha-trehalose + H2O = alpha-D-glucose + beta-D-glucose. Provides the cells with the ability to utilize trehalose at high osmolarity by splitting it into glucose molecules that can subsequently be taken up by the phosphotransferase-mediated uptake system. This is Periplasmic trehalase from Escherichia coli O7:K1 (strain IAI39 / ExPEC).